We begin with the raw amino-acid sequence, 425 residues long: MRRAGAACSAMDRLRLLLLLILGVSSGGAKETCSTGLYTHSGECCKACNLGEGVAQPCGANQTVCEPCLDNVTFSDVVSATEPCKPCTECLGLQSMSAPCVEADDAVCRCAYGYYQDEETGHCEACSVCEVGSGLVFSCQDKQNTVCEECPEGTYSDEANHVDPCLPCTVCEDTERQLRECTPWADAECEEIPGRWIPRSTPPEGSDSTAPSTQEPEVPPEQDLVPSTVADMVTTVMGSSQPVVTRGTTDNLIPVYCSILAAVVVGLVAYIAFKRWNSCKQNKQGANSRPVNQTPPPEGEKLHSDSGISVDSQSLHDQQTHTQTASGQALKGDGNLYSSLPLTKREEVEKLLNGDTWRHLAGELGYQPEHIDSFTHEACPVRALLASWGAQDSATLDALLAALRRIQRADIVESLCSESTATSPV.

An N-terminal signal peptide occupies residues 1–29; that stretch reads MRRAGAACSAMDRLRLLLLLILGVSSGGA. The Extracellular portion of the chain corresponds to 30 to 253; it reads KETCSTGLYT…VTRGTTDNLI (224 aa). TNFR-Cys repeat units follow at residues 32–65, 67–108, 109–147, and 149–189; these read TCST…QTVC, PCLD…DAVC, RCAY…NTVC, and ECPE…DAEC. Intrachain disulfides connect C33-C44, C45-C58, C48-C65, C68-C84, C87-C100, C90-C108, C110-C123, C126-C139, C129-C147, C150-C165, C168-C181, and C171-C189. N61 and N71 each carry an N-linked (GlcNAc...) asparagine glycan. The tract at residues 193 to 225 is disordered; the sequence is PGRWIPRSTPPEGSDSTAPSTQEPEVPPEQDLV. The span at 206-215 shows a compositional bias: polar residues; that stretch reads SDSTAPSTQE. Residues 254–274 form a helical membrane-spanning segment; it reads PVYCSILAAVVVGLVAYIAFK. Residues 275 to 425 are Cytoplasmic-facing; that stretch reads RWNSCKQNKQ…CSESTATSPV (151 aa). Polar residues-rich tracts occupy residues 282–292 and 306–327; these read NKQGANSRPVN and SGIS…TASG. The disordered stretch occupies residues 282–332; that stretch reads NKQGANSRPVNQTPPPEGEKLHSDSGISVDSQSLHDQQTHTQTASGQALKG. S312 is subject to Phosphoserine. Residues 327–342 form a mediates interaction with KIDINS220 region; sequence GQALKGDGNLYSSLPL. The Death domain maps to 354-419; sequence GDTWRHLAGE…DIVESLCSES (66 aa).

Homodimer; disulfide-linked. Heterodimer with SORCS2. The extracellular domains of the heterodimer bind NGF. The cytoplasmic region of the heterodimer binds TRIO. NGF binding mediates dissociation of TRIO from the receptor complex. Interacts with RTN4R. Interacts with TRAF2, TRAF4 and TRAF6. Interacts with PTPN13 and RANBP9. Interacts through TRAF6 with SQSTM1 which bridges NGFR to NTRK1. Interacts with BEX1. Interacts with BEX3. Interacts with KIDINS220 and NTRK1. Can form a ternary complex with NTRK1 and KIDINS220 and this complex is affected by the expression levels of KIDINS220. An increase in KIDINS220 expression leads to a decreased association of NGFR and NTRK1. Interacts (via death domain) with RAB31. Interacts with NTRK2; may regulate the ligand specificity of the NTRK2 receptor. Interacts with LINGO1. Interacts with NRADD. Interacts with MAGED1; the interaction antagonizes the association NGFR:NTRK1. Interacts (via death domain) with ARHGDIA and RIPK2. Interacts with BFAR. Subject to intramembrane proteolytic cleavage by the gamma-secretase complex, giving rise to an intracellular fragment that is rapidly degraded via the proteasome. Post-translationally, N- and O-glycosylated. In terms of processing, phosphorylated on serine residues.

It localises to the cell membrane. Its subcellular location is the cytoplasm. It is found in the perikaryon. The protein resides in the cell projection. The protein localises to the growth cone. It localises to the dendritic spine. Low affinity receptor which can bind to NGF, BDNF, NTF3, and NTF4. Forms a heterodimeric receptor with SORCS2 that binds the precursor forms of NGF, BDNF and NTF3 with high affinity, and has much lower affinity for mature NGF and BDNF. In response to proNGF binding, the heterodimeric receptor with SORCS2 activates a signaling cascade that leads to decreased Rac activity, reorganization of the actin cytoskeleton and neuronal growth cone collapse. Plays an important role in differentiation and survival of specific neuronal populations during development. Can mediate cell survival as well as cell death of neural cells. Plays a role in the inactivation of RHOA. Plays a role in the regulation of the translocation of GLUT4 to the cell surface in adipocytes and skeletal muscle cells in response to insulin, probably by regulating RAB31 activity, and thereby contributes to the regulation of insulin-dependent glucose uptake. Necessary for the circadian oscillation of the clock genes BMAL1, PER1, PER2 and NR1D1 in the suprachiasmatic nucleus (SCN) of the brain and in liver and of the genes involved in glucose and lipid metabolism in the liver. In Rattus norvegicus (Rat), this protein is Tumor necrosis factor receptor superfamily member 16 (Ngfr).